Reading from the N-terminus, the 257-residue chain is Beta-fibrinogenase mucrofibrase-4 (257 aa).

Positions 1 to 18 (MVLIRVLANLLILQLSYA) are cleaved as a signal peptide. Residues 19–24 (QKSSEL) constitute a propeptide that is removed on maturation. The Peptidase S1 domain occupies 25 to 248 (VIGGDECNIN…HLDWIKGFIA (224 aa)). 6 disulfide bridges follow: Cys31/Cys162, Cys49/Cys65, Cys97/Cys255, Cys141/Cys209, Cys173/Cys188, and Cys199/Cys224. Residues His64 and Asp109 each act as charge relay system in the active site. Ser203 (charge relay system) is an active-site residue.

It belongs to the peptidase S1 family. Snake venom subfamily. Monomer. As to expression, expressed by the venom gland.

Its subcellular location is the secreted. Snake venom serine protease with fibrinogenolytic activities. Cleaves beta-chain of fibrinogen (FGB) efficiently and shows relatively lower activity on alpha-chain. This chain is Beta-fibrinogenase mucrofibrase-4, found in Protobothrops mucrosquamatus (Taiwan habu).